Here is a 230-residue protein sequence, read N- to C-terminus: Heptaprenylglyceryl phosphate synthase (230 aa).

Residue K12 participates in sn-glycerol 1-phosphate binding. The Mg(2+) site is built by D14 and T40. Sn-glycerol 1-phosphate contacts are provided by residues 159-164, G189, and 209-210; these read YIEYSG and GD.

It belongs to the GGGP/HepGP synthase family. Group I subfamily. As to quaternary structure, homodimer. The cofactor is Mg(2+).

It carries out the reaction sn-glycerol 1-phosphate + all-trans-heptaprenyl diphosphate = 3-heptaprenyl-sn-glycero-1-phosphate + diphosphate. The protein operates within membrane lipid metabolism; glycerophospholipid metabolism. Functionally, prenyltransferase that catalyzes in vivo the transfer of the heptaprenyl moiety of heptaprenyl pyrophosphate (HepPP; 35 carbon atoms) to the C3 hydroxyl of sn-glycerol-1-phosphate (G1P), producing heptaprenylglyceryl phosphate (HepGP). This reaction is an ether-bond-formation step in the biosynthesis of archaea-type G1P-based membrane lipids found in Bacillales. In Staphylococcus aureus (strain Mu3 / ATCC 700698), this protein is Heptaprenylglyceryl phosphate synthase.